The following is a 160-amino-acid chain: Large ribosomal subunit protein uL16 (160 aa).

The segment covering 138-148 (KNLEVSSQENT) has biased composition (polar residues). Residues 138 to 160 (KNLEVSSQENTKNNKESQEEVKQ) form a disordered region. Positions 149–160 (KNNKESQEEVKQ) are enriched in basic and acidic residues.

It belongs to the universal ribosomal protein uL16 family. Part of the 50S ribosomal subunit.

Its function is as follows. Binds 23S rRNA and is also seen to make contacts with the A and possibly P site tRNAs. The protein is Large ribosomal subunit protein uL16 of Prochlorococcus marinus (strain MIT 9312).